A 426-amino-acid chain; its full sequence is Enolase (426 aa).

Q163 is a (2R)-2-phosphoglycerate binding site. E205 functions as the Proton donor in the catalytic mechanism. Residues D242, E283, and D310 each contribute to the Mg(2+) site. K335, R364, S365, and K386 together coordinate (2R)-2-phosphoglycerate. K335 (proton acceptor) is an active-site residue.

The protein belongs to the enolase family. The cofactor is Mg(2+).

The protein resides in the cytoplasm. It is found in the secreted. It localises to the cell surface. The catalysed reaction is (2R)-2-phosphoglycerate = phosphoenolpyruvate + H2O. Its pathway is carbohydrate degradation; glycolysis; pyruvate from D-glyceraldehyde 3-phosphate: step 4/5. In terms of biological role, catalyzes the reversible conversion of 2-phosphoglycerate (2-PG) into phosphoenolpyruvate (PEP). It is essential for the degradation of carbohydrates via glycolysis. The chain is Enolase from Beutenbergia cavernae (strain ATCC BAA-8 / DSM 12333 / CCUG 43141 / JCM 11478 / NBRC 16432 / NCIMB 13614 / HKI 0122).